The sequence spans 252 residues: NAD-dependent protein deacetylase (252 aa).

The 248-residue stretch at 1–248 folds into the Deacetylase sirtuin-type domain; that stretch reads MYLVEEAKKV…PEVISHIQSL (248 aa). Residues Ala26, Thr30, Phe37, Arg38, Gln102, Val104, Asp105, and His120 each contribute to the NAD(+) site. Phe37 contributes to the nicotinamide binding site. Nicotinamide contacts are provided by Val104 and Asp105. The Proton acceptor role is filled by His120. Residues Cys128, Cys131, Cys153, and Cys155 each contribute to the Zn(2+) site. Ser191, Ser192, Asn216, and Ile234 together coordinate NAD(+).

Belongs to the sirtuin family. Class U subfamily. Requires Zn(2+) as cofactor.

The protein resides in the cytoplasm. It catalyses the reaction N(6)-acetyl-L-lysyl-[protein] + NAD(+) + H2O = 2''-O-acetyl-ADP-D-ribose + nicotinamide + L-lysyl-[protein]. In terms of biological role, NAD-dependent protein deacetylase which modulates the activities of several enzymes which are inactive in their acetylated form. Deacetylates the N-terminal lysine residue of Alba, the major archaeal chromatin protein and that, in turn, increases Alba's DNA binding affinity, thereby repressing transcription. This is NAD-dependent protein deacetylase from Sulfolobus acidocaldarius (strain ATCC 33909 / DSM 639 / JCM 8929 / NBRC 15157 / NCIMB 11770).